The sequence spans 530 residues: Transcriptional regulator VasH (530 aa).

The 230-residue stretch at 193-422 (LIGESAAMQK…LKHLIEFGCA (230 aa)) folds into the Sigma-54 factor interaction domain. ATP is bound by residues 221–228 (GETGTGKE) and 284–293 (ANGGTLFLDE).

Its function is as follows. Transcriptional regulator of the type VI secretion system. The sequence is that of Transcriptional regulator VasH from Vibrio cholerae serotype O1 (strain ATCC 39315 / El Tor Inaba N16961).